The sequence spans 552 residues: Hydroxylamine reductase (552 aa).

[2Fe-2S] cluster is bound by residues Cys5, Cys8, Cys20, and Cys27. Residues His251, Glu275, Cys319, Cys407, Cys435, Cys460, Glu494, and Lys496 each coordinate hybrid [4Fe-2O-2S] cluster. Cys407 is modified (cysteine persulfide).

It belongs to the HCP family. [2Fe-2S] cluster serves as cofactor. Requires hybrid [4Fe-2O-2S] cluster as cofactor.

Its subcellular location is the cytoplasm. The enzyme catalyses A + NH4(+) + H2O = hydroxylamine + AH2 + H(+). Catalyzes the reduction of hydroxylamine to form NH(3) and H(2)O. The protein is Hydroxylamine reductase of Shigella flexneri.